The sequence spans 251 residues: Ubiquinone/menaquinone biosynthesis C-methyltransferase UbiE (251 aa).

S-adenosyl-L-methionine-binding positions include Thr-74, Asp-95, 123-124, and Ser-140; that span reads NA.

The protein belongs to the class I-like SAM-binding methyltransferase superfamily. MenG/UbiE family.

It carries out the reaction a 2-demethylmenaquinol + S-adenosyl-L-methionine = a menaquinol + S-adenosyl-L-homocysteine + H(+). The catalysed reaction is a 2-methoxy-6-(all-trans-polyprenyl)benzene-1,4-diol + S-adenosyl-L-methionine = a 5-methoxy-2-methyl-3-(all-trans-polyprenyl)benzene-1,4-diol + S-adenosyl-L-homocysteine + H(+). The protein operates within quinol/quinone metabolism; menaquinone biosynthesis; menaquinol from 1,4-dihydroxy-2-naphthoate: step 2/2. Its pathway is cofactor biosynthesis; ubiquinone biosynthesis. Functionally, methyltransferase required for the conversion of demethylmenaquinol (DMKH2) to menaquinol (MKH2) and the conversion of 2-polyprenyl-6-methoxy-1,4-benzoquinol (DDMQH2) to 2-polyprenyl-3-methyl-6-methoxy-1,4-benzoquinol (DMQH2). The sequence is that of Ubiquinone/menaquinone biosynthesis C-methyltransferase UbiE from Cronobacter sakazakii (strain ATCC BAA-894) (Enterobacter sakazakii).